Here is a 268-residue protein sequence, read N- to C-terminus: Trypsin-like protease (268 aa).

The N-terminal stretch at 1–41 is a signal peptide; the sequence is MTHTTTIAAKRGGLALAKKAAAAGAVALAVASLQPVSAAHA. Residues 42 to 45 constitute a propeptide, activation peptide; it reads ADAR. The region spanning 46–266 is the Peptidase S1 domain; sequence VIGGKPAAQN…FAKDIAKAAS (221 aa). Cys-67 and Cys-83 form a disulfide bridge. Catalysis depends on charge relay system residues His-82 and Asp-127. Cystine bridges form between Cys-187-Cys-202 and Cys-213-Cys-242. Catalysis depends on Ser-217, which acts as the Charge relay system.

Belongs to the peptidase S1 family.

Its function is as follows. Protease that shows preferential cleavage after Arg and Lys residues. In Streptomyces glaucescens, this protein is Trypsin-like protease.